The chain runs to 80 residues: DNA-binding protein HU-like (80 aa).

This sequence belongs to the bacterial histone-like protein family.

Its function is as follows. Histone-like DNA-binding protein which is capable of wrapping DNA to stabilize it, and thus to prevent its denaturation under extreme environmental conditions. The protein is DNA-binding protein HU-like of Rickettsia rickettsii (strain Sheila Smith).